Consider the following 235-residue polypeptide: Elongation factor Tu (235 aa).

The tr-type G domain maps to K1–E125. Position 47–50 (N47–D50) interacts with GTP.

Belongs to the TRAFAC class translation factor GTPase superfamily. Classic translation factor GTPase family. EF-Tu/EF-1A subfamily. Monomer.

The protein resides in the cytoplasm. The enzyme catalyses GTP + H2O = GDP + phosphate + H(+). Functionally, GTP hydrolase that promotes the GTP-dependent binding of aminoacyl-tRNA to the A-site of ribosomes during protein biosynthesis. The chain is Elongation factor Tu (tufA) from Leptolyngbya ectocarpi (Phormidium ectocarpi).